Consider the following 423-residue polypeptide: Tumor necrosis factor receptor superfamily member 19 (423 aa).

The N-terminal stretch at 1–29 (MALKVLLEQEKTFFTLLVLLGYLSCKVTC) is a signal peptide. The Extracellular portion of the chain corresponds to 30–170 (ESGDCRQQEF…TASSPRDTAL (141 aa)). 3 TNFR-Cys repeats span residues 33–72 (DCRQ…DAQC), 74–114 (TCRL…DAIC), and 116–149 (DCLP…EPHC). 8 cysteine pairs are disulfide-bonded: cysteine 34–cysteine 46, cysteine 49–cysteine 62, cysteine 52–cysteine 72, cysteine 75–cysteine 89, cysteine 92–cysteine 106, cysteine 95–cysteine 114, cysteine 117–cysteine 135, and cysteine 138–cysteine 149. N-linked (GlcNAc...) asparagine glycosylation occurs at asparagine 105. The chain crosses the membrane as a helical span at residues 171–191 (AAVICSALATVLLALLILCVI). The Cytoplasmic segment spans residues 192–423 (YCKRQFMEKK…LQVRQRLGSL (232 aa)).

Associates with TRAF1, TRAF2, TRAF3 and TRAF5. Interacts with LINGO1. In terms of tissue distribution, highly expressed in prostate. Detected at lower levels in thymus, spleen, testis, uterus, small intestine, colon and peripheral blood leukocytes.

The protein localises to the membrane. Functionally, can mediate activation of JNK and NF-kappa-B. May promote caspase-independent cell death. In Homo sapiens (Human), this protein is Tumor necrosis factor receptor superfamily member 19 (TNFRSF19).